Reading from the N-terminus, the 242-residue chain is Aliphatic sulfonates import ATP-binding protein SsuB 1 (242 aa).

The region spanning 11–227 is the ABC transporter domain; sequence VAVRRLSRAF…RPSHPDFEDL (217 aa). 43–50 is an ATP binding site; sequence GESGSGKT.

Belongs to the ABC transporter superfamily. Aliphatic sulfonates importer (TC 3.A.1.17.2) family. The complex is composed of two ATP-binding proteins (SsuB), two transmembrane proteins (SsuC) and a solute-binding protein (SsuA).

The protein localises to the cell inner membrane. It catalyses the reaction ATP + H2O + aliphatic sulfonate-[sulfonate-binding protein]Side 1 = ADP + phosphate + aliphatic sulfonateSide 2 + [sulfonate-binding protein]Side 1.. In terms of biological role, part of the ABC transporter complex SsuABC involved in aliphatic sulfonates import. Responsible for energy coupling to the transport system. The protein is Aliphatic sulfonates import ATP-binding protein SsuB 1 of Paracoccus denitrificans (strain Pd 1222).